Consider the following 66-residue polypeptide: Large ribosomal subunit protein bL35 (66 aa).

Belongs to the bacterial ribosomal protein bL35 family.

This chain is Large ribosomal subunit protein bL35, found in Ruegeria sp. (strain TM1040) (Silicibacter sp.).